A 188-amino-acid polypeptide reads, in one-letter code: Ribosome maturation factor RimM (188 aa).

Residues 96 to 169 enclose the PRC barrel domain; sequence DDEFYYADLE…RILIDPMAAG (74 aa).

It belongs to the RimM family. In terms of assembly, binds ribosomal protein uS19.

Its subcellular location is the cytoplasm. Its function is as follows. An accessory protein needed during the final step in the assembly of 30S ribosomal subunit, possibly for assembly of the head region. Essential for efficient processing of 16S rRNA. May be needed both before and after RbfA during the maturation of 16S rRNA. It has affinity for free ribosomal 30S subunits but not for 70S ribosomes. The sequence is that of Ribosome maturation factor RimM from Agrobacterium fabrum (strain C58 / ATCC 33970) (Agrobacterium tumefaciens (strain C58)).